We begin with the raw amino-acid sequence, 602 residues long: GTP-binding protein 2 (602 aa).

The segment at glycine 16–glutamate 64 is disordered. Basic residues predominate over residues lysine 40–glycine 50. Residues phenylalanine 170–serine 398 enclose the tr-type G domain. GTP contacts are provided by residues glycine 179–serine 186, aspartate 260–histidine 264, and serine 316–aspartate 319.

It belongs to the TRAFAC class translation factor GTPase superfamily. Classic translation factor GTPase family. GTPBP1 subfamily. Predominantly expressed in thymus, spleen, and testis. Expressed at lower levels in brain, lung, kidney, and ovary.

This chain is GTP-binding protein 2, found in Homo sapiens (Human).